The primary structure comprises 263 residues: Mannose-specific lectin 2 (263 aa).

An N-terminal signal peptide occupies residues 1-24 (MAKSLVLSSLLLALLLAAPLASLA). 2 Bulb-type lectin domains span residues 26 to 136 (NNVL…APNR) and 150 to 260 (RNVL…SSAS). Intrachain disulfides connect Cys54/Cys76 and Cys178/Cys203.

Heterotetramer of 2 domain 1 and 2 domain 2 chains arranged as a dimer of domain 1/domain 2 heterodimers.

Mannose-specific lectin. Has weak agglutinating activity towards trypsin-treated erythrocytes from rabbit but not from human. The chain is Mannose-specific lectin 2 from Crocus vernus (Dutch crocus).